The primary structure comprises 324 residues: Probable peptidylglycine alpha-hydroxylating monooxygenase 1 (324 aa).

The first 22 residues, 1-22 (MPRFYLLSSCALLAFATSFCNA), serve as a signal peptide directing secretion. Disulfide bonds link Cys41/Cys85 and Cys73/Cys101. Cu cation is bound by residues His66 and His67. His142 contacts Cu cation. Residue Asn182 is glycosylated (N-linked (GlcNAc...) asparagine). Cu cation contacts are provided by His207, His209, and Met284. Cys264 and Cys285 are joined by a disulfide.

The protein belongs to the copper type II ascorbate-dependent monooxygenase family. Cu(2+) is required as a cofactor.

It is found in the secreted. It catalyses the reaction a [peptide]-C-terminal glycine + 2 L-ascorbate + O2 = a [peptide]-C-terminal (2S)-2-hydroxyglycine + 2 monodehydro-L-ascorbate radical + H2O. In terms of biological role, monooxygenase that catalyzes an essential reaction in C-terminal alpha-amidation of peptides. Produces an unstable peptidyl(2-hydroxyglycine) intermediate. C-terminal amidation of peptides such as neuropeptides is essential for full biological activity. This is Probable peptidylglycine alpha-hydroxylating monooxygenase 1 from Caenorhabditis elegans.